We begin with the raw amino-acid sequence, 176 residues long: Probable DNA-directed RNA polymerase subunit delta (176 aa).

The 68-residue stretch at 14–81 (CSMIEVVHSV…GENRWGLRSW (68 aa)) folds into the HTH HARE-type domain. Positions 91 to 176 (ILPQPKPKKK…ETEEEEEEEL (86 aa)) are disordered. Residues 106-176 (DGFDDYIEED…ETEEEEEEEL (71 aa)) show a composition bias toward acidic residues.

This sequence belongs to the RpoE family. As to quaternary structure, RNAP is composed of a core of 2 alpha, a beta and a beta' subunits. The core is associated with a delta subunit and one of several sigma factors.

Its function is as follows. Participates in both the initiation and recycling phases of transcription. In the presence of the delta subunit, RNAP displays an increased specificity of transcription, a decreased affinity for nucleic acids, and an increased efficiency of RNA synthesis because of enhanced recycling. In Bacillus thuringiensis (strain Al Hakam), this protein is Probable DNA-directed RNA polymerase subunit delta.